The primary structure comprises 1410 residues: Ribosome-binding protein 1 (1410 aa).

At 1–7 the chain is on the lumenal side; that stretch reads MDIYDTQ. Residues 8–28 form a helical membrane-spanning segment; the sequence is TLGVVVFGGFMVVSAIGIFLV. Residues 29–1410 lie on the Cytoplasmic side of the membrane; it reads STFSMKETSY…GSSSKEGTSV (1382 aa). 2 disordered regions span residues 44-90 and 129-152; these read NQRK…DPAP and QEKLASSPKDKKKKEKKVAKVEPA. Residues 52–63 show a composition bias toward basic residues; that stretch reads THHQKVEKKKKE. The segment covering 64 to 88 has biased composition (basic and acidic residues); that stretch reads KTVEKKGKTKKKEEKPNGKIPDHDP. Residue Lys148 forms a Glycyl lysine isopeptide (Lys-Gly) (interchain with G-Cter in SUMO2) linkage. Phosphoserine occurs at positions 159 and 165. Disordered regions lie at residues 173–648 and 895–925; these read APKE…PLYL and QSSHASLRADAEKAQEQQQQMAELHSKLQSS. Polar residues-rich tracts occupy residues 191–209 and 225–238; these read TPATGTTQGKKAEGTQNQS and TPNQGKKTEGTPNQ. Tandem repeats lie at residues 197-206, 207-216, 217-226, 227-236, 237-246, 247-256, 257-266, 267-276, 277-286, 287-296, 297-306, 307-316, 317-326, 327-336, 337-346, 347-356, 357-366, 367-376, 377-386, 387-396, 397-406, 407-416, 417-426, 427-436, 437-446, 447-456, 457-466, 467-476, 477-486, 487-496, 497-506, 507-516, and 517-526. The 41 X 10 AA approximate tandem repeats of [TN]-Q-[GSA]-[KRQT]-K-[ATGSV]-[ED]-[GTAS]-[ATIS]-[PQTAS] stretch occupies residues 197–604; the sequence is TQGKKAEGTQ…NQGKKTESAS (408 aa). Residues Thr225, Thr235, Thr245, and Thr255 each carry the phosphothreonine modification. 2 stretches are compositionally biased toward polar residues: residues 265–278 and 295–519; these read AQNQGKKVDTTPNQ and AQNQ…QNQG. The segment covering 520-532 has biased composition (basic and acidic residues); sequence KKTEGAQGKKAER. A 34; approximate repeat occupies 527-534; that stretch reads GKKAERSP. Ser533 carries the phosphoserine modification. Residues 535–544 form repeat 35; the sequence is NQGKKGEGAP. Residues 545-554 form a 36; approximate repeat; the sequence is IQGKKADSVA. Over residues 553-567 the composition is skewed to polar residues; it reads VANQGTKVEGITNQG. A run of 2 repeats spans residues 555 to 564 and 565 to 574. A compositionally biased stretch (basic and acidic residues) spans 568 to 581; the sequence is KKAEGSPSEGKKAE. Residues Ser573 and Ser583 each carry the phosphoserine modification. A 39; approximate repeat occupies 575-584; sequence SEGKKAEGSP. 2 consecutive repeat copies span residues 585–594 and 595–604. A compositionally biased stretch (polar residues) spans 602–612; the sequence is SASVQGRNTDV. Position 615 is a phosphoserine (Ser615). Residue Lys620 forms a Glycyl lysine isopeptide (Lys-Gly) (interchain with G-Cter in SUMO1) linkage. Ser900 bears the Phosphoserine mark. At Lys932 the chain carries N6-acetyllysine. A phosphoserine mark is found at Ser959 and Ser978. 4 disordered regions span residues 1093 to 1122, 1260 to 1287, 1330 to 1362, and 1378 to 1410; these read GPTLLKHPPAPAEPSSDLASKLREAEETQS, EMKSHVEDGDIAGAPASSPEAPPAEQDP, EKLRTAGPLESSETEEASQLKERLEKEKKLTSD, and QEQLAREKDTVKKLQEQLEKAEDGSSSKEGTSV. Ser1276 and Ser1277 each carry phosphoserine. Basic and acidic residues-rich tracts occupy residues 1347–1360 and 1381–1403; these read SQLKERLEKEKKLT and LAREKDTVKKLQEQLEKAEDGSS.

It is found in the endoplasmic reticulum membrane. In terms of biological role, acts as a ribosome receptor and mediates interaction between the ribosome and the endoplasmic reticulum membrane. The polypeptide is Ribosome-binding protein 1 (RRBP1) (Homo sapiens (Human)).